Reading from the N-terminus, the 410-residue chain is Multidrug transporter MdfA (410 aa).

The Cytoplasmic segment spans residues 1–15; it reads MQNKLASGARLGRQA. The chain crosses the membrane as a helical span at residues 16-36; the sequence is LLFPLCLVLYEFSTYIGNDMI. Topologically, residues 37-52 are periplasmic; it reads QPGMLAVVEQYQAGID. A helical transmembrane segment spans residues 53-73; that stretch reads WVPTSMTAYLAGGMFLQWLLG. Residues 74–82 are Cytoplasmic-facing; that stretch reads PLSDRIGRR. The helical transmembrane segment at 83–103 threads the bilayer; that stretch reads PVMLAGVVWFIVTCLAILLAQ. Residues 104 to 109 lie on the Periplasmic side of the membrane; the sequence is NIEQFT. A helical membrane pass occupies residues 110-130; the sequence is LLRFLQGISLCFIGAVGYAAI. The Cytoplasmic segment spans residues 131 to 144; the sequence is QESFEEAVCIKITA. A helical transmembrane segment spans residues 145-165; it reads LMANVALIAPLLGPLVGAAWI. Position 166 (His-166) is a topological domain, periplasmic. Residues 167-187 traverse the membrane as a helical segment; the sequence is VLPWEGMFVLFAALAAISFFG. The Cytoplasmic segment spans residues 188–226; sequence LQRAMPETATRIGEKLSLKELGRDYKLVLKNGRFVAGAL. Residues 227 to 247 form a helical membrane-spanning segment; the sequence is ALGFVSLPLLAWIAQSPIIII. The Periplasmic portion of the chain corresponds to 248–255; that stretch reads TGEQLSSY. Residues 256–276 form a helical membrane-spanning segment; the sequence is EYGLLQVPIFGALIAGNLLLA. At 277–287 the chain is on the cytoplasmic side; it reads RLTSRRTVRSL. Residues 288 to 308 traverse the membrane as a helical segment; sequence IIMGGWPIMIGLLVAAAATVI. Residues 309 to 314 lie on the Periplasmic side of the membrane; the sequence is SSHAYL. Residues 315-335 form a helical membrane-spanning segment; the sequence is WMTAGLSIYAFGIGLANAGLV. The Cytoplasmic portion of the chain corresponds to 336 to 346; that stretch reads RLTLFASDMSK. A helical membrane pass occupies residues 347–367; it reads GTVSAAMGMLQMLIFTVGIEI. The Periplasmic segment spans residues 368–378; that stretch reads SKHAWLNGGNG. Residues 379-399 traverse the membrane as a helical segment; the sequence is LFNLFNLVNGILWLSLMVIFL. Over 400–410 the chain is Cytoplasmic; sequence KDKQMGNSHEG.

The protein belongs to the major facilitator superfamily. MdfA family. As to quaternary structure, monomer.

Its subcellular location is the cell inner membrane. Its function is as follows. Efflux pump driven by the proton motive force. Confers resistance to a broad spectrum of chemically unrelated drugs. In Escherichia coli O6:H1 (strain CFT073 / ATCC 700928 / UPEC), this protein is Multidrug transporter MdfA (mdfA).